Here is a 1004-residue protein sequence, read N- to C-terminus: Caspase recruitment domain-containing protein 14 (1004 aa).

Residues 15–107 form the CARD domain; sequence DEETLWEMME…DVYTLVTGLQ (93 aa). A coiled-coil region spans residues 128–409; the sequence is LAGAIGSLQE…RTQLRQLQAE (282 aa). The maintains the protein in an inactive state stretch occupies residues 409 to 568; that stretch reads EPPGVLKQEA…RRPARRILSQ (160 aa). Phosphoserine is present on Ser-544. The PDZ domain maps to 568–658; sequence QVTMLAFQGD…FCCLSVKVNT (91 aa). One can recognise a Guanylate kinase-like domain in the interval 807–990; it reads AESCLTLVPY…LLSCVRQAIA (184 aa).

In terms of assembly, interacts (via CARD domain) with BCL10 (via CARD domain). Forms a complex with MALT1 and BCL10; resulting in the formation of a CBM (CARD14-BLC10-MALT1) complex. Interacts with TRAF2, TRAF3 and TRAF6. As to expression, isoform 1 is detected in placenta and epidermal keratinocytes. Isoform 2 is detected in leukocytes and fetal brain.

The protein resides in the cytoplasm. Functionally, acts as a scaffolding protein that can activate the inflammatory transcription factor NF-kappa-B and p38/JNK MAP kinase signaling pathways. Forms a signaling complex with BCL10 and MALT1, and activates MALT1 proteolytic activity and inflammatory gene expression. MALT1 is indispensable for CARD14-induced activation of NF-kappa-B and p38/JNK MAP kinases. May play a role in signaling mediated by TRAF2, TRAF3 and TRAF6 and protects cells against apoptosis. Its function is as follows. Not able to activate the inflammatory transcription factor NF-kappa-B and may function as a dominant negative regulator. The protein is Caspase recruitment domain-containing protein 14 (CARD14) of Homo sapiens (Human).